The primary structure comprises 222 residues: Glycerol-3-phosphate acyltransferase (222 aa).

6 helical membrane passes run 4-24 (ALLLCLCLLLITYLMGSIPTG), 56-76 (PAAIAVLAIDISKGVMAVALV), 87-107 (ALPAAWQNWLTLGVAIAVVLG), 130-150 (FMLNIWLALGTLATFLTVIFF), 153-173 (IVSLSSIVAAIAVNGIALALQ), and 174-191 (LPPPYLAFTFLAGMYVIV).

This sequence belongs to the PlsY family. Probably interacts with PlsX.

It is found in the cell inner membrane. It catalyses the reaction an acyl phosphate + sn-glycerol 3-phosphate = a 1-acyl-sn-glycero-3-phosphate + phosphate. It participates in lipid metabolism; phospholipid metabolism. Functionally, catalyzes the transfer of an acyl group from acyl-phosphate (acyl-PO(4)) to glycerol-3-phosphate (G3P) to form lysophosphatidic acid (LPA). This enzyme utilizes acyl-phosphate as fatty acyl donor, but not acyl-CoA or acyl-ACP. The polypeptide is Glycerol-3-phosphate acyltransferase (Synechocystis sp. (strain ATCC 27184 / PCC 6803 / Kazusa)).